A 182-amino-acid polypeptide reads, in one-letter code: Dirigent protein 1 (182 aa).

Positions 1–24 are cleaved as a signal peptide; that stretch reads MAKRFLLLLPLLSSILLLAVSVTA. An N-linked (GlcNAc...) asparagine glycan is attached at asparagine 125.

Belongs to the plant dirigent protein family. As to quaternary structure, homodimer.

The protein resides in the secreted. It is found in the extracellular space. The protein localises to the apoplast. Dirigent proteins impart stereoselectivity on the phenoxy radical-coupling reaction, yielding optically active lignans from two molecules of coniferyl alcohol in the biosynthesis of lignans, flavonolignans, and alkaloids and thus plays a central role in plant secondary metabolism. This chain is Dirigent protein 1 (DIR1), found in Arabidopsis thaliana (Mouse-ear cress).